Here is a 318-residue protein sequence, read N- to C-terminus: Small ribosomal subunit protein uS2 (318 aa).

Belongs to the universal ribosomal protein uS2 family.

In Mesomycoplasma hyopneumoniae (strain J / ATCC 25934 / NCTC 10110) (Mycoplasma hyopneumoniae), this protein is Small ribosomal subunit protein uS2.